We begin with the raw amino-acid sequence, 154 residues long: MHKKSSTLIRKREISDVTKESKVVLKSDQQWREQLSEQEYHVCREQGTEPPFSGKLLHNKDSGEYACTCCHAPLFSSVNKYDSGCGWPSFDAPINETAVLYLDDFSHGMKRVEIRCARCDSHLGHVFPDGPKTTGERFCVNSVSLIFNKIETNE.

The MsrB domain maps to 28–150; sequence DQQWREQLSE…NSVSLIFNKI (123 aa). Zn(2+) contacts are provided by cysteine 67, cysteine 70, cysteine 116, and cysteine 119. The active-site Nucleophile is cysteine 139.

This sequence belongs to the MsrB Met sulfoxide reductase family. Zn(2+) is required as a cofactor.

It catalyses the reaction L-methionyl-[protein] + [thioredoxin]-disulfide + H2O = L-methionyl-(R)-S-oxide-[protein] + [thioredoxin]-dithiol. The polypeptide is Peptide methionine sulfoxide reductase MsrB (Vibrio vulnificus (strain CMCP6)).